Consider the following 246-residue polypeptide: Deoxycytidylate 5-hydroxymethyltransferase (246 aa).

Cys148 is a catalytic residue.

Belongs to the thymidylate synthase family.

It carries out the reaction dCMP + (6R)-5,10-methylene-5,6,7,8-tetrahydrofolate + H2O = 5-hydroxymethyl-dCMP + (6S)-5,6,7,8-tetrahydrofolate. The chain is Deoxycytidylate 5-hydroxymethyltransferase (42) from Enterobacteria phage T6 (Bacteriophage T6).